The chain runs to 379 residues: F-box protein At1g67340 (379 aa).

Positions 41–92 (ADLLDSIPDDLVISILCKLGSTSRCPADFINVLLTCKRLKGLAMNPIVLSRL) constitute an F-box domain. Zn(2+) is bound by residues histidine 304, cysteine 307, cysteine 320, cysteine 323, cysteine 329, cysteine 333, histidine 342, and cysteine 346. The segment at 304 to 346 (HAGCGRPETRKHEFRRCSVCGVVNYCSRACQALDWKLRHKMDC) adopts an MYND-type; atypical zinc-finger fold. The disordered stretch occupies residues 358–379 (GGEGNVQIDGNGNGDNVLLPMS).

As to quaternary structure, part of a SCF (ASK-cullin-F-box) protein ligase complex. Interacts with SKP1A/ASK1, SKP1B/ASK2, ASK4, ASK11 and ASK13.

The protein localises to the nucleus. Its pathway is protein modification; protein ubiquitination. Functionally, component of SCF(ASK-cullin-F-box) E3 ubiquitin ligase complexes, which may mediate the ubiquitination and subsequent proteasomal degradation of target proteins. The sequence is that of F-box protein At1g67340 from Arabidopsis thaliana (Mouse-ear cress).